Reading from the N-terminus, the 149-residue chain is Protein SprT-like (149 aa).

Residues 5–143 (DYVKQVSLED…CGLCRGKLLL (139 aa)) enclose the SprT-like domain. His64 contacts Zn(2+). Glu65 is a catalytic residue. Residue His68 coordinates Zn(2+).

Belongs to the SprT family. Zn(2+) is required as a cofactor.

Its subcellular location is the cytoplasm. The sequence is that of Protein SprT-like from Streptococcus pneumoniae (strain Hungary19A-6).